Reading from the N-terminus, the 239-residue chain is Exosome complex exonuclease RRP46 homolog (239 aa).

Met1 is subject to N-acetylmethionine.

It belongs to the RNase PH family. As to quaternary structure, probable component of the RNA exosome complex.

The protein localises to the nucleus. It is found in the nucleolus. Functionally, probable component of the exosome 3'-&gt;5' exoribonuclease complex, a complex that degrades inherently unstable mRNAs containing AU-rich elements (AREs) within their 3'-untranslated regions. The protein is Exosome complex exonuclease RRP46 homolog of Arabidopsis thaliana (Mouse-ear cress).